Reading from the N-terminus, the 370-residue chain is ECF RNA polymerase sigma factor SigG (370 aa).

The interval 63-129 (EPYRRELLAH…LTALEGRRRR (67 aa)) is sigma-70 factor domain-2. Residues 85–88 (DLVQ) carry the Polymerase core binding motif. The segment at 180–232 (LAFVAALQHLSPRQRAVLLLRDVLQWKSAEVADAIGTSTVAVNSLLQRARSQL) is sigma-70 factor domain-4. Positions 207 to 226 (SAEVADAIGTSTVAVNSLLQ) form a DNA-binding region, H-T-H motif.

It belongs to the sigma-70 factor family. ECF subfamily. Interacts transiently with the RNA polymerase catalytic core formed by RpoA, RpoB, RpoC and RpoZ (2 alpha, 1 beta, 1 beta' and 1 omega subunit) to form the RNA polymerase holoenzyme that can initiate transcription.

Its function is as follows. Sigma factors are initiation factors that promote the attachment of RNA polymerase to specific initiation sites and are then released. Extracytoplasmic function (ECF) sigma factors are held in an inactive form by a cognate anti-sigma factor until released, although no anti-sigma factor is known for this protein. May be involved in host intracellular survival after infection (strains H37Rv and CDC 1551). A role in the SOS response is controversial; it has been seen in strain CDC 1551 but not in H37Rv. The protein is ECF RNA polymerase sigma factor SigG (sigG) of Mycobacterium tuberculosis (strain CDC 1551 / Oshkosh).